The sequence spans 1462 residues: FYVE, RhoGEF and PH domain-containing protein 5 (1462 aa).

Disordered regions lie at residues G37 to E323, Y492 to I512, S592 to V613, H670 to S718, E746 to I777, and C851 to V887. Basic and acidic residues predominate over residues P72–G82. Composition is skewed to acidic residues over residues S95–G106 and E137–A151. Residues S161–S177 show a composition bias toward basic and acidic residues. 2 stretches are compositionally biased toward acidic residues: residues G211 to G220 and M242 to E255. The segment covering S592–S611 has biased composition (polar residues). Residues S676–S685 show a composition bias toward low complexity. Residues P858–V887 show a composition bias toward basic and acidic residues. In terms of domain architecture, DH spans R892 to S1084. In terms of domain architecture, PH 1 spans E1113 to P1207. An FYVE-type zinc finger spans residues V1242 to K1301. Residues C1248, C1251, C1264, C1267, C1272, C1275, C1293, and C1296 each coordinate Zn(2+). One can recognise a PH 2 domain in the interval G1363–V1461.

In terms of tissue distribution, expressed in endothelial cells (at protein level).

It is found in the cytoplasm. Its subcellular location is the cytoskeleton. It localises to the cell projection. The protein localises to the ruffle membrane. The protein resides in the endoplasmic reticulum. It is found in the golgi apparatus. Its subcellular location is the early endosome. Its function is as follows. Activates CDC42, a member of the Ras-like family of Rho- and Rac proteins, by exchanging bound GDP for free GTP. Mediates VEGF-induced CDC42 activation. May regulate proangiogenic action of VEGF in vascular endothelial cells, including network formation, directional movement and proliferation. May play a role in regulating the actin cytoskeleton and cell shape. In Homo sapiens (Human), this protein is FYVE, RhoGEF and PH domain-containing protein 5 (FGD5).